Here is a 455-residue protein sequence, read N- to C-terminus: Succinyl-CoA--L-malate CoA-transferase alpha subunit (455 aa).

Residues 1-58 (MAKASRLTRSTGQPTEVSEGQVTGTSEMPPTGEEPSGHAESKPPASDPMSTPGTGQEQ) form a disordered region. Composition is skewed to polar residues over residues 7 to 28 (LTRS…TSEM) and 48 to 58 (PMSTPGTGQEQ). Asp227 (nucleophile) is an active-site residue.

The protein belongs to the CoA-transferase III family. Forms a large complex composed of six heterodimers (alpha, beta).

The catalysed reaction is succinyl-CoA + (S)-malate = (S)-malyl-CoA + succinate. It carries out the reaction (3S)-citramalate + succinyl-CoA = (3S)-citramalyl-CoA + succinate. In terms of biological role, involved in the 3-hydroxypropionate cycle used for autotrophic carbon dioxide fixation. Catalyzes the transfer of CoA moiety from succinyl-CoA to L-malate to yield L-malyl-CoA. The sequence is that of Succinyl-CoA--L-malate CoA-transferase alpha subunit (smtA) from Chloroflexus aurantiacus (strain ATCC 29366 / DSM 635 / J-10-fl).